We begin with the raw amino-acid sequence, 285 residues long: Probable endonuclease 4 (285 aa).

Zn(2+) contacts are provided by H69, H109, E145, D179, H182, H216, D229, H231, and E261.

Belongs to the AP endonuclease 2 family. Zn(2+) serves as cofactor.

The enzyme catalyses Endonucleolytic cleavage to 5'-phosphooligonucleotide end-products.. Endonuclease IV plays a role in DNA repair. It cleaves phosphodiester bonds at apurinic or apyrimidinic (AP) sites, generating a 3'-hydroxyl group and a 5'-terminal sugar phosphate. The polypeptide is Probable endonuclease 4 (Shigella sonnei (strain Ss046)).